The sequence spans 1699 residues: Hybrid signal transduction histidine kinase E (1699 aa).

Disordered stretches follow at residues 1-32 and 58-97; these read MDKL…NLEN and NNII…NPNV. A compositionally biased stretch (low complexity) spans 7–32; the sequence is NNNLSPPSSPSSSTTTPNLSSTNLEN. A run of 6 helical transmembrane segments spans residues 142 to 162, 164 to 184, 191 to 211, 238 to 258, 262 to 282, and 295 to 315; these read CILL…LIFL, SFYP…IVST, LVAL…FLQI, LNFL…IFFP, FSIT…LISI, and NLIV…ILSI. Polar residues predominate over residues 412-432; it reads ITNGGNNKQTSTTSANSTPRY. Disordered regions lie at residues 412-439 and 542-593; these read ITNG…NNNN and LLNN…NISN. A compositionally biased stretch (low complexity) spans 544–593; that stretch reads NNNNNNNNNNNNNNNNNNNNNNNNNNSNNNNNNNSNNNNNNNNINNNISN. Residues 678 to 950 enclose the Histidine kinase domain; sequence TVSHEVRTPI…AFSFTSILST (273 aa). A Phosphohistidine; by autocatalysis modification is found at H681. 5 disordered regions span residues 819–866, 1018–1054, 1186–1239, 1252–1294, and 1351–1406; these read NNNN…NNNN, NNNN…NDNN, KKQQ…RKSS, MVQV…NPNN, and SIPI…SPPP. The span at 1198-1212 shows a compositional bias: polar residues; sequence MGDTLSSTKSPQYTN. Positions 1219-1239 are enriched in low complexity; that stretch reads SSSSNGSLNKSNRSNLLRKSS. Over residues 1271-1282 the composition is skewed to polar residues; sequence KGNNSNPNSTEL. 2 stretches are compositionally biased toward low complexity: residues 1283 to 1294 and 1355 to 1392; these read NSTNSVNGNPNN and NINN…NNNN. One can recognise a Response regulatory domain in the interval 1575–1695; that stretch reads NALIVDDTEL…TLKDTLLKWG (121 aa). A 4-aspartylphosphate modification is found at D1625.

Its subcellular location is the membrane. The enzyme catalyses ATP + protein L-histidine = ADP + protein N-phospho-L-histidine.. Its function is as follows. May act in a signal transduction pathway. This protein undergoes an ATP-dependent autophosphorylation at a conserved histidine residue in the kinase core, and a phosphoryl group is then transferred to a conserved aspartate residue in the receiver domain. The chain is Hybrid signal transduction histidine kinase E (dhkE) from Dictyostelium discoideum (Social amoeba).